The primary structure comprises 224 residues: MTPSLGLIFWQSVIFLISFIILSKFAWNPINKLLEKREKYIIDSINNAEKAKEYLKNIKLKKKNILKNTEKMKYFIINEAFKKKEQIEKEAKKKAKLESYLIINKTQLLIENKKKIAIEKIKNEILNMSIIISEKILNKELEINEKNNNYFFNKKLLIIMKFSYKIFIKRYAKGFFFLVFNSKKEIFIKNEIEKFFSYKKELYKKNYFKFKYTFFKKKRKDNFF.

Residues 2 to 22 (TPSLGLIFWQSVIFLISFIIL) form a helical membrane-spanning segment.

It belongs to the ATPase B chain family. F-type ATPases have 2 components, F(1) - the catalytic core - and F(0) - the membrane proton channel. F(1) has five subunits: alpha(3), beta(3), gamma(1), delta(1), epsilon(1). F(0) has three main subunits: a(1), b(2) and c(10-14). The alpha and beta chains form an alternating ring which encloses part of the gamma chain. F(1) is attached to F(0) by a central stalk formed by the gamma and epsilon chains, while a peripheral stalk is formed by the delta and b chains.

It localises to the cell membrane. In terms of biological role, f(1)F(0) ATP synthase produces ATP from ADP in the presence of a proton or sodium gradient. F-type ATPases consist of two structural domains, F(1) containing the extramembraneous catalytic core and F(0) containing the membrane proton channel, linked together by a central stalk and a peripheral stalk. During catalysis, ATP synthesis in the catalytic domain of F(1) is coupled via a rotary mechanism of the central stalk subunits to proton translocation. Functionally, component of the F(0) channel, it forms part of the peripheral stalk, linking F(1) to F(0). This is ATP synthase subunit b from Karelsulcia muelleri (strain GWSS) (Sulcia muelleri).